The primary structure comprises 377 residues: Acetylornithine aminotransferase (377 aa).

Residues 94 to 95 and F121 contribute to the pyridoxal 5'-phosphate site; that span reads GT. R124 contributes to the N(2)-acetyl-L-ornithine binding site. 206–209 is a binding site for pyridoxal 5'-phosphate; it reads DEIQ. K235 bears the N6-(pyridoxal phosphate)lysine mark. S263 lines the N(2)-acetyl-L-ornithine pocket. T264 is a binding site for pyridoxal 5'-phosphate.

The protein belongs to the class-III pyridoxal-phosphate-dependent aminotransferase family. ArgD subfamily. In terms of assembly, homodimer. Pyridoxal 5'-phosphate serves as cofactor.

The protein resides in the cytoplasm. It catalyses the reaction N(2)-acetyl-L-ornithine + 2-oxoglutarate = N-acetyl-L-glutamate 5-semialdehyde + L-glutamate. The protein operates within amino-acid biosynthesis; L-arginine biosynthesis; N(2)-acetyl-L-ornithine from L-glutamate: step 4/4. In Lactococcus lactis subsp. lactis (strain IL1403) (Streptococcus lactis), this protein is Acetylornithine aminotransferase.